Reading from the N-terminus, the 141-residue chain is Hemoglobin subunit alpha (141 aa).

The Globin domain occupies 1–141; the sequence is VLSPADKNNV…VSTVLTSKYR (141 aa). The residue at position 3 (Ser3) is a Phosphoserine. N6-succinyllysine occurs at positions 7 and 11. At Lys16 the chain carries N6-acetyllysine; alternate. Lys16 carries the N6-succinyllysine; alternate modification. Phosphotyrosine is present on Tyr24. Ser35 carries the post-translational modification Phosphoserine. Lys40 bears the N6-succinyllysine mark. Ser49 is subject to Phosphoserine. O2 is bound at residue His58. His87 contacts heme b. Ser102 carries the phosphoserine modification. The residue at position 108 (Thr108) is a Phosphothreonine. 2 positions are modified to phosphoserine: Ser124 and Ser131. Residues Thr134 and Thr137 each carry the phosphothreonine modification. A Phosphoserine modification is found at Ser138.

It belongs to the globin family. As to quaternary structure, heterotetramer of two alpha chains and two beta chains. As to expression, red blood cells.

Its function is as follows. Involved in oxygen transport from the lung to the various peripheral tissues. In terms of biological role, hemopressin acts as an antagonist peptide of the cannabinoid receptor CNR1. Hemopressin-binding efficiently blocks cannabinoid receptor CNR1 and subsequent signaling. The protein is Hemoglobin subunit alpha (HBA) of Urocitellus townsendii (Townsend's ground squirrel).